Consider the following 196-residue polypeptide: UPF0200 protein MK0400 (196 aa).

Gly7–Gly14 contributes to the ATP binding site.

This sequence belongs to the UPF0200 family.

The polypeptide is UPF0200 protein MK0400 (Methanopyrus kandleri (strain AV19 / DSM 6324 / JCM 9639 / NBRC 100938)).